The sequence spans 544 residues: MNDFWQHCSALLERELTPQQYVTWIKPLAPVAFDAAANTLSIAAPNRFKLDWVKSQFSGRIADMARDFWHTPIDVQFVLDPKAGMRAPAAAAPAPASARPASAPGSMGGSAGNGAAVDAAVGAVQAAQTARANGANSANNAMANLNANARAAAEQNANARAAAEDSADLDLPSLDANEAAAARRTWRPGQSAGSNGNGETDSMYERSKLNPVLTFDNFVTGKANQLARAAAIQVADNPGISYNPLFLYGGVGLGKTHLIHAIGNQLLMDKAGARIRYIHAEQYVSDVVKAYQRKAFDDFKRYYHSLDLLLIDDIQFFSGKSRTQEEFFYAFEALVANKAQVIITSDTYPKEISGIDDRLISRFDSGLTVAIEPPELEMRVAILMRKAQSEFVSLNEDVAFFVAKHLRSNVRELEGALRKILAYSKFHGREITIEVTKEALKDLLTVQNRQISVENIQKTTADFYSIKVADMYSKKRPANIARPRQIAMYLAKELTQKSLPEIGELFGGRDHTTVLHAVRKIADERSKDAQLNHELHVLEQTLKG.

A domain I, interacts with DnaA modulators region spans residues 1–71 (MNDFWQHCSA…ADMARDFWHT (71 aa)). The segment at 71–207 (TPIDVQFVLD…GETDSMYERS (137 aa)) is domain II. Residues 90–105 (AAAPAPASARPASAPG) are compositionally biased toward low complexity. 2 disordered regions span residues 90-111 (AAAP…GGSA) and 180-203 (AAAR…TDSM). Residues 191-200 (SAGSNGNGET) show a composition bias toward polar residues. Positions 208–424 (KLNPVLTFDN…GALRKILAYS (217 aa)) are domain III, AAA+ region. Residues Gly252, Gly254, Lys255, and Thr256 each contribute to the ATP site. Residues 425–544 (KFHGREITIE…LHVLEQTLKG (120 aa)) are domain IV, binds dsDNA.

This sequence belongs to the DnaA family. As to quaternary structure, oligomerizes as a right-handed, spiral filament on DNA at oriC.

The protein resides in the cytoplasm. Functionally, plays an essential role in the initiation and regulation of chromosomal replication. ATP-DnaA binds to the origin of replication (oriC) to initiate formation of the DNA replication initiation complex once per cell cycle. Binds the DnaA box (a 9 base pair repeat at the origin) and separates the double-stranded (ds)DNA. Forms a right-handed helical filament on oriC DNA; dsDNA binds to the exterior of the filament while single-stranded (ss)DNA is stabiized in the filament's interior. The ATP-DnaA-oriC complex binds and stabilizes one strand of the AT-rich DNA unwinding element (DUE), permitting loading of DNA polymerase. After initiation quickly degrades to an ADP-DnaA complex that is not apt for DNA replication. Binds acidic phospholipids. The sequence is that of Chromosomal replication initiator protein DnaA from Paraburkholderia xenovorans (strain LB400).